Consider the following 633-residue polypeptide: ATP-dependent RNA helicase mss116, mitochondrial (633 aa).

The N-terminal 32 residues, 1 to 32 (MKTGRTRPLRVFDILVPPWPPTVPHRIKLPRG), are a transit peptide targeting the mitochondrion. The Q motif motif lies at 38-66 (EFYSAITRNWNKLKGLKNCWQIWKDVQEI). The 179-residue stretch at 70 to 248 (IRKYQGESTV…TAEKLSNIQT (179 aa)) folds into the Helicase ATP-binding domain. 83–90 (PGNNDGAH) provides a ligand contact to ATP. Positions 195 to 198 (RPLE) match the DEAD box motif. In terms of domain architecture, Helicase C-terminal spans 262 to 429 (FLADVKRILQ…NVDLVIQVGL (168 aa)). The interval 567–633 (FNYATGNDLN…GGRGGKPRAA (67 aa)) is disordered.

It belongs to the DEAD box helicase family. DDX18/HAS1 subfamily.

The protein resides in the mitochondrion matrix. It catalyses the reaction ATP + H2O = ADP + phosphate + H(+). Functionally, ATP-dependent RNA helicase required for mitochondrial splicing of group I and II introns. Also required for efficient mitochondrial translation. This Aspergillus oryzae (strain ATCC 42149 / RIB 40) (Yellow koji mold) protein is ATP-dependent RNA helicase mss116, mitochondrial (mss116).